Here is a 502-residue protein sequence, read N- to C-terminus: Glycerol kinase (502 aa).

Threonine 14 is a binding site for ADP. Residues threonine 14, threonine 15, and serine 16 each coordinate ATP. Threonine 14 provides a ligand contact to sn-glycerol 3-phosphate. Arginine 18 lines the ADP pocket. Sn-glycerol 3-phosphate-binding residues include arginine 84, glutamate 85, and tyrosine 136. Arginine 84, glutamate 85, and tyrosine 136 together coordinate glycerol. Residue histidine 232 is modified to Phosphohistidine; by HPr. Aspartate 246 contacts sn-glycerol 3-phosphate. The glycerol site is built by aspartate 246 and glutamine 247. ADP contacts are provided by threonine 268 and glycine 311. Threonine 268, glycine 311, glutamine 315, and glycine 412 together coordinate ATP. ADP contacts are provided by glycine 412 and asparagine 416.

Belongs to the FGGY kinase family. Homotetramer and homodimer (in equilibrium). In terms of processing, the phosphoenolpyruvate-dependent sugar phosphotransferase system (PTS), including enzyme I, and histidine-containing protein (HPr) are required for the phosphorylation, which leads to the activation of the enzyme.

The catalysed reaction is glycerol + ATP = sn-glycerol 3-phosphate + ADP + H(+). It functions in the pathway polyol metabolism; glycerol degradation via glycerol kinase pathway; sn-glycerol 3-phosphate from glycerol: step 1/1. Its activity is regulated as follows. Activated by phosphorylation and inhibited by fructose 1,6-bisphosphate (FBP). Key enzyme in the regulation of glycerol uptake and metabolism. Catalyzes the phosphorylation of glycerol to yield sn-glycerol 3-phosphate. In Streptococcus pneumoniae (strain P1031), this protein is Glycerol kinase.